A 443-amino-acid chain; its full sequence is Methyl-coenzyme M reductase I subunit beta (443 aa).

Coenzyme M is bound at residue Tyr-367. Gly-369 contributes to the coenzyme B binding site.

It belongs to the methyl-coenzyme M reductase beta subunit family. In terms of assembly, MCR is a hexamer of two alpha, two beta, and two gamma chains, forming a dimer of heterotrimers. Coenzyme F430 serves as cofactor.

Its subcellular location is the cytoplasm. It catalyses the reaction coenzyme B + methyl-coenzyme M = methane + coenzyme M-coenzyme B heterodisulfide. The protein operates within one-carbon metabolism; methyl-coenzyme M reduction; methane from methyl-coenzyme M: step 1/1. Its activity is regulated as follows. Methyl-coenzyme M reductase activity is inhibited by 3-nitrooxypropanol (3-NOP) in vitro and in vivo, by oxidation of its active site Ni(I), which stops both growth and methanogenesis. Is also inhibited by the reaction product CoM-S-S-CoB. Component of the methyl-coenzyme M reductase (MCR) I that catalyzes the reductive cleavage of methyl-coenzyme M (CoM-S-CH3 or 2-(methylthio)ethanesulfonate) using coenzyme B (CoB or 7-mercaptoheptanoylthreonine phosphate) as reductant which results in the production of methane and the mixed heterodisulfide of CoB and CoM (CoM-S-S-CoB). This is the final step in methanogenesis. Neither N-6-mercaptohexanoylthreonine phosphate (H-S-HxoTP) nor N-8-mercaptooctanoylthreonine phosphate (H-SOcoTP) nor any other thiol compound such as CoA or CoM can substitute for CoB as the electron donor. This Methanothermobacter marburgensis (strain ATCC BAA-927 / DSM 2133 / JCM 14651 / NBRC 100331 / OCM 82 / Marburg) (Methanobacterium thermoautotrophicum) protein is Methyl-coenzyme M reductase I subunit beta (mcrB).